We begin with the raw amino-acid sequence, 166 residues long: Peptide methionine sulfoxide reductase MsrA (166 aa).

The active site involves Cys11.

Belongs to the MsrA Met sulfoxide reductase family.

It catalyses the reaction L-methionyl-[protein] + [thioredoxin]-disulfide + H2O = L-methionyl-(S)-S-oxide-[protein] + [thioredoxin]-dithiol. The catalysed reaction is [thioredoxin]-disulfide + L-methionine + H2O = L-methionine (S)-S-oxide + [thioredoxin]-dithiol. Has an important function as a repair enzyme for proteins that have been inactivated by oxidation. Catalyzes the reversible oxidation-reduction of methionine sulfoxide in proteins to methionine. This is Peptide methionine sulfoxide reductase MsrA from Lachnoclostridium phytofermentans (strain ATCC 700394 / DSM 18823 / ISDg) (Clostridium phytofermentans).